We begin with the raw amino-acid sequence, 491 residues long: Probable ribonuclease FAU-1 (491 aa).

The protein belongs to the FAU-1 family.

Its function is as follows. Probable RNase involved in rRNA stability through maturation and/or degradation of precursor rRNAs. Binds to RNA in loop regions with AU-rich sequences. The sequence is that of Probable ribonuclease FAU-1 from Thermofilum pendens (strain DSM 2475 / Hrk 5).